Consider the following 397-residue polypeptide: Enoyl-[acyl-carrier-protein] reductase [NADH] (397 aa).

Residues 48–53, 74–75, 111–112, and 139–140 contribute to the NAD(+) site; these read GASTGY, LE, DA, and LA. Y225 lines the substrate pocket. Y235 (proton donor) is an active-site residue. NAD(+) contacts are provided by residues K244 and 273-275; that span reads VVT.

Belongs to the TER reductase family. Monomer.

It catalyses the reaction a 2,3-saturated acyl-[ACP] + NAD(+) = a (2E)-enoyl-[ACP] + NADH + H(+). It participates in lipid metabolism; fatty acid biosynthesis. Functionally, involved in the final reduction of the elongation cycle of fatty acid synthesis (FAS II). Catalyzes the reduction of a carbon-carbon double bond in an enoyl moiety that is covalently linked to an acyl carrier protein (ACP). This is Enoyl-[acyl-carrier-protein] reductase [NADH] from Tolumonas auensis (strain DSM 9187 / NBRC 110442 / TA 4).